The sequence spans 665 residues: Probable potassium transport system protein Kup 2 (665 aa).

The next 13 membrane-spanning stretches (helical) occupy residues 13–33 (GLLVSIGIVYGDIGTSPLYVM), 55–75 (ISLILWTITLLTTVKYVLIAL), 98–118 (WLVLPALIGGAALLADGTLTP), 138–158 (IPVPNQNSVLIITIIILLFLF), 167–187 (IIGKTFGPIMLIWFTFLGLTG), 195–215 (LSLLEALNPVLAVKILFSPAN), 217–237 (VGVLILGAVFLATTGAEALYS), 250–270 (SWPYVFICLALNYLGQGVWIL), 295–315 (FFAIILATLAAIIASQALITG), 344–364 (IFIPSINKMLCAATIGIVFLF), 375–395 (GLAITVTMLMTTILLFEYLSL), 400–420 (ILLRLVFLFLFGAIESMFLIS), and 428–448 (GGYVTVIIAAFIGAIMYIWYF).

This sequence belongs to the HAK/KUP transporter (TC 2.A.72) family.

It is found in the cell membrane. It catalyses the reaction K(+)(in) + H(+)(in) = K(+)(out) + H(+)(out). Its function is as follows. Transport of potassium into the cell. Likely operates as a K(+):H(+) symporter. This chain is Probable potassium transport system protein Kup 2, found in Lactobacillus johnsonii (strain CNCM I-12250 / La1 / NCC 533).